A 198-amino-acid polypeptide reads, in one-letter code: MTTILQINSAARSQGAQSTLLADELTAKLQQGNPGATVKVRNLLADALPHLDDAVLGAFFTPADQRSAEQNAIVAKSDELVDELRSADVIVIGAPMYNFGVSSQLKAYFDWIARAGVTFRYTSEGPEGLIKGKKAYVVSARGGKHVGMPTDSQTPFLKTFLGFIGLTDVTFVYAEGLALGPDAATEALASAREAIAAV.

Position 96-99 (96-99 (MYNF)) interacts with FMN.

Belongs to the azoreductase type 1 family. Homodimer. The cofactor is FMN.

The catalysed reaction is 2 a quinone + NADH + H(+) = 2 a 1,4-benzosemiquinone + NAD(+). It carries out the reaction N,N-dimethyl-1,4-phenylenediamine + anthranilate + 2 NAD(+) = 2-(4-dimethylaminophenyl)diazenylbenzoate + 2 NADH + 2 H(+). In terms of biological role, quinone reductase that provides resistance to thiol-specific stress caused by electrophilic quinones. Functionally, also exhibits azoreductase activity. Catalyzes the reductive cleavage of the azo bond in aromatic azo compounds to the corresponding amines. The chain is FMN-dependent NADH:quinone oxidoreductase from Burkholderia mallei (strain ATCC 23344).